Reading from the N-terminus, the 218-residue chain is UPF0711 protein C18orf21 homolog (218 aa).

A Phosphoserine modification is found at serine 126. Residues 130–146 (ASAASKASPKTPKRAAA) show a composition bias toward low complexity. Positions 130 to 192 (ASAASKASPK…NGSKRKKHFS (63 aa)) are disordered. Threonine 140 carries the post-translational modification Phosphothreonine. The segment covering 147–156 (GSTNISQSVH) has biased composition (polar residues). Over residues 161 to 172 (RSPSSTVRTPTS) the composition is skewed to low complexity. Residues 173–183 (GQSTPICSSRN) show a composition bias toward polar residues.

The protein belongs to the UPF0711 family.

This chain is UPF0711 protein C18orf21 homolog, found in Rattus norvegicus (Rat).